The sequence spans 221 residues: DNA replication complex GINS protein SLD5 (221 aa).

Belongs to the GINS4/SLD5 family. Component of the GINS complex which is a heterotetramer of gins1/psf1, gins2/psf2, gins3/psf3 and gins4/sld5. Component of the CMG helicase complex, composed of the mcm2-7 complex, the GINS complex and cdc45.

It localises to the nucleus. It is found in the chromosome. Its subcellular location is the cytoplasm. Its function is as follows. Required for initiation of chromosomal DNA replication. Core component of CDC45-MCM-GINS (CMG) helicase, the molecular machine that unwinds template DNA during replication, and around which the replisome is built. The chain is DNA replication complex GINS protein SLD5 from Xenopus laevis (African clawed frog).